The chain runs to 191 residues: Peptide methionine sulfoxide reductase (191 aa).

Disordered stretches follow at residues 1-20 (MASS…TPEN) and 168-191 (EKGG…KCYG).

Belongs to the MsrA Met sulfoxide reductase family.

The enzyme catalyses L-methionyl-[protein] + [thioredoxin]-disulfide + H2O = L-methionyl-(S)-S-oxide-[protein] + [thioredoxin]-dithiol. It carries out the reaction [thioredoxin]-disulfide + L-methionine + H2O = L-methionine (S)-S-oxide + [thioredoxin]-dithiol. Functionally, has an important function as a repair enzyme for proteins that have been inactivated by oxidation. Catalyzes the reversible oxidation-reduction of methionine sulfoxide in proteins to methionine. In Fragaria ananassa (Strawberry), this protein is Peptide methionine sulfoxide reductase.